The sequence spans 428 residues: Histidinol dehydrogenase (428 aa).

The substrate site is built by S234, Q256, and H259. Q256 and H259 together coordinate Zn(2+). Active-site proton acceptor residues include E323 and H324. Substrate-binding residues include H324, D357, E411, and H416. D357 contributes to the Zn(2+) binding site. Position 416 (H416) interacts with Zn(2+).

The protein belongs to the histidinol dehydrogenase family. Requires Zn(2+) as cofactor.

The catalysed reaction is L-histidinol + 2 NAD(+) + H2O = L-histidine + 2 NADH + 3 H(+). It participates in amino-acid biosynthesis; L-histidine biosynthesis; L-histidine from 5-phospho-alpha-D-ribose 1-diphosphate: step 9/9. In terms of biological role, catalyzes the sequential NAD-dependent oxidations of L-histidinol to L-histidinaldehyde and then to L-histidine. The chain is Histidinol dehydrogenase from Campylobacter jejuni (strain RM1221).